Reading from the N-terminus, the 406-residue chain is Lysine-specific demethylase 8 (406 aa).

Residues 143-152 show a composition bias toward basic and acidic residues; the sequence is KAERSEEPFS. The disordered stretch occupies residues 143-162; that stretch reads KAERSEEPFSKKRKHDCKSE. The 137-residue stretch at 270–406 folds into the JmjC domain; it reads DQVPELKEDI…LSFSVSFWWS (137 aa). Fe cation is bound by residues His-311 and Asp-313.

Requires Fe(2+) as cofactor.

It is found in the nucleus. The enzyme catalyses N(6),N(6)-dimethyl-L-lysyl(36)-[histone H3] + 2 2-oxoglutarate + 2 O2 = L-lysyl(36)-[histone H3] + 2 formaldehyde + 2 succinate + 2 CO2. Histone demethylase required for G2/M phase cell cycle progression. Specifically demethylates dimethylated 'Lys-36' (H3K36me2) of histone H3, an epigenetic repressive mark, thereby acting as a transcription activator. May play a role in the regulation of the circadian clock. This is Lysine-specific demethylase 8 (kdm8) from Danio rerio (Zebrafish).